A 214-amino-acid chain; its full sequence is MITASLLPLPATSSSSGRRSLPPPTTTFPRPPPPLRRHRHLSSSSSSASSTESDGGGGSTNGSLPGLPPVVVEEEEEEFCPVECVTEFKTEEELARVLERAKATGALVVVDFFRPSCGSCKYIEQGFMKLCKGSGDHGSSVVFLKHNVIDEYDEQSEVADRLRIKVVPLFHFYKNGVLLEAFATRDKERIIAAIQKYTAPSSPPAESEEPSQEG.

The span at Met-1–Ser-20 shows a compositional bias: low complexity. Residues Met-1 to Pro-68 are disordered. The transit peptide at Met-1–Val-71 directs the protein to the chloroplast. A compositionally biased stretch (pro residues) spans Leu-21–Pro-34. A compositionally biased stretch (low complexity) spans Ser-42 to Ser-53. The Thioredoxin domain maps to Val-72–Ala-199. Catalysis depends on nucleophile residues Cys-117 and Cys-120. The cysteines at positions 117 and 120 are disulfide-linked.

The protein belongs to the thioredoxin family.

The protein localises to the plastid. Its subcellular location is the chloroplast. Functionally, probable thiol-disulfide oxidoreductase that may participate in various redox reactions. This chain is Thioredoxin-like 4, chloroplastic, found in Oryza sativa subsp. japonica (Rice).